Consider the following 276-residue polypeptide: NAD kinase (276 aa).

The Proton acceptor role is filled by aspartate 61. Residues 61–62, arginine 66, 135–136, arginine 146, histidine 163, aspartate 165, and alanine 200 each bind NAD(+); these read DG and NE.

Belongs to the NAD kinase family. A divalent metal cation serves as cofactor.

It localises to the cytoplasm. The enzyme catalyses NAD(+) + ATP = ADP + NADP(+) + H(+). Functionally, involved in the regulation of the intracellular balance of NAD and NADP, and is a key enzyme in the biosynthesis of NADP. Catalyzes specifically the phosphorylation on 2'-hydroxyl of the adenosine moiety of NAD to yield NADP. This is NAD kinase from Chloroflexus aggregans (strain MD-66 / DSM 9485).